A 209-amino-acid chain; its full sequence is LexA repressor (209 aa).

Positions 29-49 (VREIGSAIGLSSTSTVHGHID) form a DNA-binding region, H-T-H motif. Active-site for autocatalytic cleavage activity residues include serine 130 and lysine 168.

It belongs to the peptidase S24 family. As to quaternary structure, homodimer.

It catalyses the reaction Hydrolysis of Ala-|-Gly bond in repressor LexA.. Functionally, represses a number of genes involved in the response to DNA damage (SOS response), including recA and lexA. In the presence of single-stranded DNA, RecA interacts with LexA causing an autocatalytic cleavage which disrupts the DNA-binding part of LexA, leading to derepression of the SOS regulon and eventually DNA repair. This chain is LexA repressor, found in Pediococcus pentosaceus (strain ATCC 25745 / CCUG 21536 / LMG 10740 / 183-1w).